A 301-amino-acid polypeptide reads, in one-letter code: Nodulation protein D 3 (301 aa).

An HTH lysR-type domain is found at 6–63; it reads LDLNLLVVLDALLTARNLTAAASSINLSQPAMSAAVARLRNYFNDELFTMSGRERVLT. Positions 23-43 form a DNA-binding region, H-T-H motif; that stretch reads LTAAASSINLSQPAMSAAVAR.

It belongs to the LysR transcriptional regulatory family.

Its function is as follows. NodD regulates the expression of the nodABCFE genes which encode other nodulation proteins. NodD is also a negative regulator of its own expression. Binds flavonoids as inducers. The chain is Nodulation protein D 3 (nodD3) from Mesorhizobium japonicum (strain LMG 29417 / CECT 9101 / MAFF 303099) (Mesorhizobium loti (strain MAFF 303099)).